A 1450-amino-acid polypeptide reads, in one-letter code: MITTYSTFLFNFLSQFQYLVNIPEPLILFGLYYGFLTTLPISFSHIVVIRNRLIEGKTSSVMAFCGLITGQLCMIGTIYYTPLYKLFIKPHLILLLSIIYSFFYWQRLRNNQNYDDLREAQSLINVRNFFSFFDSFVFQILNPILLPTPIFFRLNNVFLFRYSNNLNFFLSFFIGSLIGNFLFFNALNWIRYRFEQDSNVIYPVLKLLINKSIIPIVFCICLIPIAKYSHIPFCTMKQKEGQSSYSFDKNWPNIIFDSNQPHRPIRIFSETKTDDNLNINDNLSKKQTSQFFFKECISDGNVRISYTYPSTLANFQTDLSSSFQDFSLSEQSFDNLYSNWKLEKLSRKDNLNNLLLTKIKLLNNKKEWFYKHFQNKFGTFIKDDNNYNKFVKKSNDVRLKQSSKIQIKKSKLLTSDIRDISTTQSGFYDLKKNKLKSFISQKFKMNSNNSTLPVWNHLNKQLLQNELKRIKKQLQDKTKNIKENDFNNLKLLKSNIETIDNTINDIHHNKIKQITSVDLIKIFATNNKTLLLETLAFNKKITQKDNFNFNKLFQHKNKKFTTNSGNENTYLNLNDIFKNIKRLPKWRTFSKHVVYDEVSDIRRRAIKSNSKLKIANKDSDIIIFEYKKSLNFRARLPKGSLRARRKNKFTWKLFHNNLNSPFFIRSKQLLNKTDIPFLKYNENYLNFFKNFISPDKNINYLNNDISEMRRQELLFKWDKTNVHILRSMVLVGQAFFRKYIKLPIFIFFKNLSRQLLYQPSEWTKDWSNWMNEWYIFCYYDGTELAKDQWPEMWLQRGIQIKLINPFYIKPWYIQKSFIKNKQNKKTRTSYLTVFGSQQELPFGKKIRMPSFWKPVRREVSKSIKLKLYFPFLTLQKNTIILFEKVFNKKRINEDNKTIEKSILNKKNEQLILKKDEVIPNNKSIAGKLSKLDFHNQNITKTSIKNATKQILIKNEYNSLLKENKNLFTKNKIVFLKIKNILNKLNLKLIKVKINFTYKIKTVLKIISRNLLKFYSIIQFQLENLGRNNSNDLSYKNQLSYQKDFPNFNNFCLNQANIIQNLCKNNILKHKKLNQNFQINSKNLNQTNIIDVNPENIKAQDFKNLLENIYTFTPTINLWDKLSTNNWKISVQNNWKQKSYNNYDLTKKALVSKNLNFISYFYQNNLINNLNKKIKHTKIFNLSKNYLSLNNLNQNQIKNFDFQNSLNNNITYKKNIKNFTIRQNVPSQLRRWDWKNNKIKKFVNRLLQKNTILLKEEVFNLIPFFDRFTIQNPMIRNWSHPISSILDDEIFTYELLDTFLQINKNIDFLHTKQIEDNLSSNSNQAIASLPLSSTTAENFLYYLTTVEDLISIEDKKELKILNSLNFNKSTPNYIKTNVVEKSLNENLSKNLQSILSKETLDSINNTQILKKFLWASYRCEDLACMNRFWFSTNNGSRFGTLRLRLYPNLKN.

6 helical membrane passes run 29-49 (FGLY…IVVI), 61-81 (VMAF…IYYT), 86-106 (LFIK…FYWQ), 132-152 (FFDS…PIFF), 166-186 (LNFF…FFNA), and 213-233 (IIPI…HIPF).

This sequence belongs to the TIC214 family. As to quaternary structure, part of the Tic complex.

It localises to the plastid. The protein localises to the chloroplast inner membrane. Involved in protein precursor import into chloroplasts. May be part of an intermediate translocation complex acting as a protein-conducting channel at the inner envelope. The chain is Protein TIC 214 from Chaetosphaeridium globosum (Charophycean green alga).